We begin with the raw amino-acid sequence, 403 residues long: Fasciclin-like arabinogalactan protein 2 (403 aa).

The signal sequence occupies residues 1–26 (MAYLRRAATALVLIFQLHLFLSLSNA). 2 consecutive FAS1 domains span residues 27–174 (HNIT…SQVL) and 187–326 (SDLI…DKVL). N-linked (GlcNAc...) asparagine glycans are attached at residues asparagine 28, asparagine 130, asparagine 164, and asparagine 248. The disordered stretch occupies residues 338–371 (SAPAPKSSKKKPKNAEADADGPSADAPSDDDVEV). Alanine 378 carries the GPI-anchor amidated alanine lipid modification. The propeptide at 379–403 (VSAMITRTSNVVTAIVGLCFGVWLM) is removed in mature form.

It belongs to the fasciclin-like AGP family. As to expression, expressed mainly in flowers and to a lesser extent in leaves and roots.

It is found in the cell membrane. May be a cell surface adhesion protein. The sequence is that of Fasciclin-like arabinogalactan protein 2 (FLA2) from Arabidopsis thaliana (Mouse-ear cress).